A 426-amino-acid polypeptide reads, in one-letter code: Pannexin-1 (426 aa).

Topologically, residues 1–40 (MAIAHLATEYVFSDFLLKEPTEPKFKGLRLELAVDKMVTC) are cytoplasmic. At Cys40 the chain carries S-nitrosocysteine. The helical transmembrane segment at 41–61 (IAVGLPLLLISLAFAQEISIG) threads the bilayer. Residues 62-106 (TQISCFSPSSFSWRQAAFVDSYCWAAVQQKNSLQSESGNLPLWLH) lie on the Extracellular side of the membrane. Cystine bridges form between Cys66-Cys264 and Cys84-Cys245. The helical transmembrane segment at 107-127 (KFFPYILLLFAILLYLPALFW) threads the bilayer. The Cytoplasmic segment spans residues 128–216 (RFAAAPHLCS…HLIMKYISCR (89 aa)). Position 198 is a phosphotyrosine (Tyr198). The helical transmembrane segment at 217-237 (LVTFAVVLLACIYLSYYFSLS) threads the bilayer. Residues 238 to 277 (SLSDEFLCSIKSGVLRNDSTIPDSFQCKLIAVGIFQLLSL) lie on the Extracellular side of the membrane. N-linked (GlcNAc...) asparagine glycosylation is present at Asn254. A helical transmembrane segment spans residues 278 to 298 (INLLVYALLVPVVIYTLFVPF). At 299–426 (RQKTDVLKVY…SRQRLLNSSC (128 aa)) the chain is on the cytoplasmic side. Cys346 carries the S-nitrosocysteine modification. Residues 407–426 (ETAANNGEKNSRQRLLNSSC) are disordered.

The protein belongs to the pannexin family. In terms of assembly, homoheptameric. Post-translationally, S-nitrosylation inhibits channel currents and ATP release. N-glycosylation plays a role in cell surface targeting. Glycosylation at its extracellular surface makes unlikely that two oligomers could dock to form an intercellular channel such as in gap junctions. Exists in three glycosylation states: non-glycosylated (GLY0), high-mannose glycosylated (GLY1), and fully mature glycosylated (GLY2). In terms of processing, cleaved by CASP3 and CASP7 during apoptosis. Cleavage opens the channel for the release of metabolites and induces plasma membrane permeability during apoptosis. Post-translationally, phosphorylated at Tyr-198 by SRC. Phosphorylation activates ATP release. Constitutively phosphorylated in vascular smooth muscle cells. Expressed in the eye, thyroid, prostate, kidney and liver. Abundantly expressed in the CNS, including hippocampus, olfactory bulb, cortex, cerebellum and white matter.

The protein resides in the cell membrane. It is found in the endoplasmic reticulum membrane. The catalysed reaction is Ca(2+)(in) = Ca(2+)(out). It carries out the reaction ATP(in) = ATP(out). It catalyses the reaction K(+)(in) = K(+)(out). The enzyme catalyses chloride(in) = chloride(out). The catalysed reaction is iodide(out) = iodide(in). It carries out the reaction Na(+)(in) = Na(+)(out). It catalyses the reaction nitrate(in) = nitrate(out). The enzyme catalyses L-aspartate(out) = L-aspartate(in). The catalysed reaction is L-glutamate(out) = L-glutamate(in). It carries out the reaction D-gluconate(in) = D-gluconate(out). It catalyses the reaction spermidine(in) = spermidine(out). In terms of biological role, ion channel involved in a variety of physiological functions such as blood pressure regulation, apoptotic cell clearance and oogenesis. Forms anion-selective channels with relatively low conductance and an order of permeabilities: nitrate&gt;iodide&gt;chlroride&gt;&gt;aspartate=glutamate=gluconate. Can release ATP upon activation through phosphorylation or cleavage at C-terminus. May play a role as a Ca(2+)-leak channel to regulate ER Ca(2+) homeostasis. Functionally, during apoptosis, the C terminal tail is cleaved by caspases, which opens the main pore acting as a large-pore ATP efflux channel with a broad distribution, which allows the regulated release of molecules and ions smaller than 1 kDa, such as nucleotides ATP and UTP, and selective plasma membrane permeability to attract phagocytes that engulf the dying cells. The protein is Pannexin-1 (Panx1) of Rattus norvegicus (Rat).